The primary structure comprises 131 residues: Sec-independent protein translocase protein TatB (131 aa).

The chain crosses the membrane as a helical span at residues 2–22; it reads FDGIGFMELLLIGILGLVVLG. Polar residues-rich tracts occupy residues 68 to 83 and 116 to 131; these read ESQG…QDSI and AEKS…KPNG. Residues 68 to 131 are disordered; it reads ESQGLKNLSP…TGANSDKPNG (64 aa).

This sequence belongs to the TatB family. In terms of assembly, the Tat system comprises two distinct complexes: a TatABC complex, containing multiple copies of TatA, TatB and TatC subunits, and a separate TatA complex, containing only TatA subunits. Substrates initially bind to the TatABC complex, which probably triggers association of the separate TatA complex to form the active translocon.

It localises to the cell inner membrane. In terms of biological role, part of the twin-arginine translocation (Tat) system that transports large folded proteins containing a characteristic twin-arginine motif in their signal peptide across membranes. Together with TatC, TatB is part of a receptor directly interacting with Tat signal peptides. TatB may form an oligomeric binding site that transiently accommodates folded Tat precursor proteins before their translocation. The protein is Sec-independent protein translocase protein TatB of Shewanella pealeana (strain ATCC 700345 / ANG-SQ1).